We begin with the raw amino-acid sequence, 218 residues long: Capsid protein (218 aa).

Met-1 carries the post-translational modification N-acetylmethionine; by host. Positions 1 to 10 (MDKSESTSAG) are enriched in low complexity. The tract at residues 1-30 (MDKSESTSAGRNRRRRLRRGSRSASSSSDA) is disordered. Over residues 11 to 21 (RNRRRRLRRGS) the composition is skewed to basic residues.

It belongs to the cucumovirus capsid protein family.

Its subcellular location is the virion. Capsid protein. Probably binds RNA and plays a role in packaging. The protein is Capsid protein of Cucumber mosaic virus (strain Y) (CMV).